The chain runs to 276 residues: Formamidopyrimidine-DNA glycosylase (276 aa).

P2 functions as the Schiff-base intermediate with DNA in the catalytic mechanism. Residue E3 is the Proton donor of the active site. Catalysis depends on K60, which acts as the Proton donor; for beta-elimination activity. Positions 93 and 112 each coordinate DNA. The segment at 240 to 274 (NVYGKKGEPCVTCGTILEKTVVGGRGTHYCPICQP) adopts an FPG-type zinc-finger fold. R264 functions as the Proton donor; for delta-elimination activity in the catalytic mechanism.

It belongs to the FPG family. In terms of assembly, monomer. It depends on Zn(2+) as a cofactor.

It carries out the reaction Hydrolysis of DNA containing ring-opened 7-methylguanine residues, releasing 2,6-diamino-4-hydroxy-5-(N-methyl)formamidopyrimidine.. The enzyme catalyses 2'-deoxyribonucleotide-(2'-deoxyribose 5'-phosphate)-2'-deoxyribonucleotide-DNA = a 3'-end 2'-deoxyribonucleotide-(2,3-dehydro-2,3-deoxyribose 5'-phosphate)-DNA + a 5'-end 5'-phospho-2'-deoxyribonucleoside-DNA + H(+). Involved in base excision repair of DNA damaged by oxidation or by mutagenic agents. Acts as a DNA glycosylase that recognizes and removes damaged bases. Has a preference for oxidized purines, such as 7,8-dihydro-8-oxoguanine (8-oxoG). Has AP (apurinic/apyrimidinic) lyase activity and introduces nicks in the DNA strand. Cleaves the DNA backbone by beta-delta elimination to generate a single-strand break at the site of the removed base with both 3'- and 5'-phosphates. In Bacillus cereus (strain ATCC 14579 / DSM 31 / CCUG 7414 / JCM 2152 / NBRC 15305 / NCIMB 9373 / NCTC 2599 / NRRL B-3711), this protein is Formamidopyrimidine-DNA glycosylase.